A 449-amino-acid polypeptide reads, in one-letter code: Probable glycine dehydrogenase (decarboxylating) subunit 1 (449 aa).

Belongs to the GcvP family. N-terminal subunit subfamily. The glycine cleavage system is composed of four proteins: P, T, L and H. In this organism, the P 'protein' is a heterodimer of two subunits.

It catalyses the reaction N(6)-[(R)-lipoyl]-L-lysyl-[glycine-cleavage complex H protein] + glycine + H(+) = N(6)-[(R)-S(8)-aminomethyldihydrolipoyl]-L-lysyl-[glycine-cleavage complex H protein] + CO2. Its function is as follows. The glycine cleavage system catalyzes the degradation of glycine. The P protein binds the alpha-amino group of glycine through its pyridoxal phosphate cofactor; CO(2) is released and the remaining methylamine moiety is then transferred to the lipoamide cofactor of the H protein. This Sulfurisphaera tokodaii (strain DSM 16993 / JCM 10545 / NBRC 100140 / 7) (Sulfolobus tokodaii) protein is Probable glycine dehydrogenase (decarboxylating) subunit 1.